A 118-amino-acid chain; its full sequence is Non-specific lipid-transfer protein (118 aa).

An N-terminal signal peptide occupies residues 1–25; it reads MDCIRILWSVAVGLLLVSWRPTMFA. Cystine bridges form between Cys30/Cys76, Cys40/Cys53, Cys54/Cys98, and Cys74/Cys113.

This sequence belongs to the plant LTP family.

In terms of biological role, plant non-specific lipid-transfer proteins transfer phospholipids as well as galactolipids across membranes. May play a role in wax or cutin deposition in the cell walls of expanding epidermal cells and certain secretory tissues. The polypeptide is Non-specific lipid-transfer protein (Ambrosia artemisiifolia (Common ragweed)).